Consider the following 466-residue polypeptide: Trigger factor (466 aa).

Residues 166–245 enclose the PPIase FKBP-type domain; the sequence is GDFAQIDLVA…LNAVKERELP (80 aa). 2 disordered regions span residues 313–332 and 424–466; these read LEQESRLEDDEHRAEVTESS and LPDD…AADK. A compositionally biased stretch (acidic residues) spans 426 to 444; the sequence is DDGEAVDEDATPEDTDAPA. A compositionally biased stretch (basic residues) spans 453-466; the sequence is PKKKAAAKKKAADK.

It belongs to the FKBP-type PPIase family. Tig subfamily.

It is found in the cytoplasm. The catalysed reaction is [protein]-peptidylproline (omega=180) = [protein]-peptidylproline (omega=0). In terms of biological role, involved in protein export. Acts as a chaperone by maintaining the newly synthesized protein in an open conformation. Functions as a peptidyl-prolyl cis-trans isomerase. This chain is Trigger factor, found in Leifsonia xyli subsp. xyli (strain CTCB07).